A 195-amino-acid polypeptide reads, in one-letter code: Large ribosomal subunit protein eL18 (195 aa).

Residue K126 forms a Glycyl lysine isopeptide (Lys-Gly) (interchain with G-Cter in SUMO2) linkage. Residue S137 is modified to Phosphoserine. The interval 158–195 is disordered; sequence HFGKAPGTPHSHTKPYVRSKGRKFERARGRRASRGYKN. T165 is subject to Phosphothreonine. 2 stretches are compositionally biased toward basic residues: residues 168–178 and 185–195; these read SHTKPYVRSKG and RGRRASRGYKN. K171 is covalently cross-linked (Glycyl lysine isopeptide (Lys-Gly) (interchain with G-Cter in SUMO2)).

It belongs to the eukaryotic ribosomal protein eL18 family. In terms of assembly, component of the large ribosomal subunit.

It localises to the cytoplasm. The protein resides in the cytosol. Its subcellular location is the rough endoplasmic reticulum. Functionally, component of the large ribosomal subunit. This is Large ribosomal subunit protein eL18 (RPL18) from Sus scrofa (Pig).